The following is a 137-amino-acid chain: Nucleoside diphosphate kinase (137 aa).

Residues K10, F58, R86, T92, R103, and N113 each coordinate ATP. Catalysis depends on H116, which acts as the Pros-phosphohistidine intermediate.

Belongs to the NDK family. As to quaternary structure, homotetramer. Mg(2+) is required as a cofactor.

It is found in the cytoplasm. The enzyme catalyses a 2'-deoxyribonucleoside 5'-diphosphate + ATP = a 2'-deoxyribonucleoside 5'-triphosphate + ADP. It catalyses the reaction a ribonucleoside 5'-diphosphate + ATP = a ribonucleoside 5'-triphosphate + ADP. Its function is as follows. Major role in the synthesis of nucleoside triphosphates other than ATP. The ATP gamma phosphate is transferred to the NDP beta phosphate via a ping-pong mechanism, using a phosphorylated active-site intermediate. The chain is Nucleoside diphosphate kinase from Helicobacter pylori (strain P12).